The sequence spans 680 residues: Lipase 1 (680 aa).

The N-terminal stretch at 1–34 is a signal peptide; sequence MKSQNKYSIRKFSVGASSILIATLLFLSGGQAQA. Positions 35–290 are excised as a propeptide; sequence AEKQVNMGNS…AKAKDDQTNK (256 aa). The segment at 82-259 is disordered; the sequence is KNLHNDKTIS…PTKDNDKKNG (178 aa). Basic and acidic residues predominate over residues 84–112; the sequence is LHNDKTISEENHRKTDDLNKDQLKDDKKS. Residues 125 to 138 show a composition bias toward polar residues; it reads KNNNANPSDVNQGL. Residues 148-170 are compositionally biased toward low complexity; the sequence is SKVASQQQSKEADNSQDSNANNN. Residues 204–223 are compositionally biased toward polar residues; the sequence is QPQQNNQANDKITNYNFNNE. The segment covering 224-234 has biased composition (basic and acidic residues); the sequence is QEVKPQKDEKT. A compositionally biased stretch (polar residues) spans 235-246; the sequence is LSVSDLKNNQKS. Ser-408 serves as the catalytic Nucleophile. Catalysis depends on Asp-600, which acts as the Charge relay system. Asp-638 is a Ca(2+) binding site. His-639 functions as the Charge relay system in the catalytic mechanism. Asp-641, Asp-646, and Asp-649 together coordinate Ca(2+).

Belongs to the AB hydrolase superfamily. Lipase family.

The protein resides in the secreted. It catalyses the reaction a triacylglycerol + H2O = a diacylglycerol + a fatty acid + H(+). In Staphylococcus aureus (strain MSSA476), this protein is Lipase 1 (lip1).